The following is a 1479-amino-acid chain: DNA-directed RNA polymerase subunit beta'' (1479 aa).

Positions 220, 296, 303, and 306 each coordinate Zn(2+). 2 disordered regions span residues 618-640 (TRAE…REDE) and 663-756 (LEDE…KKEG). 3 stretches are compositionally biased toward acidic residues: residues 622–631 (DSEEEYETLE), 704–717 (DEYG…EDEY), and 731–749 (LEED…PEED).

It belongs to the RNA polymerase beta' chain family. RpoC2 subfamily. In plastids the minimal PEP RNA polymerase catalytic core is composed of four subunits: alpha, beta, beta', and beta''. When a (nuclear-encoded) sigma factor is associated with the core the holoenzyme is formed, which can initiate transcription. The cofactor is Zn(2+).

The protein localises to the plastid. Its subcellular location is the chloroplast. It carries out the reaction RNA(n) + a ribonucleoside 5'-triphosphate = RNA(n+1) + diphosphate. DNA-dependent RNA polymerase catalyzes the transcription of DNA into RNA using the four ribonucleoside triphosphates as substrates. This chain is DNA-directed RNA polymerase subunit beta'', found in Triticum aestivum (Wheat).